Reading from the N-terminus, the 157-residue chain is MPKKTIYFGAGWFTDRQNKAYKEAMEALKENPTIDLENSYVPLDNQYKGIRVDEHPEYLHDKVWATATYNNDLNGIKTNDIMLGVYIPDEEDVGLGMELGYALSQGKYVLLVIPDEDYGKPINLMSWGVSDNVIKMSQLKDFNFNKPRFDFYEGAVY.

The active-site Nucleophile is E98.

The protein belongs to the nucleoside deoxyribosyltransferase family. As to quaternary structure, homohexamer.

The catalysed reaction is 2-deoxy-D-ribosyl-base(1) + base(2) = 2-deoxy-D-ribosyl-base(2) + base(1).. It functions in the pathway nucleotide metabolism; nucleotide salvage pathway. Its function is as follows. Catalyzes the cleavage of the glycosidic bond of 2'-deoxyribonucleosides and the transfer of the deoxyribosyl moiety to an acceptor purine or pyrimidine base. The protein is Nucleoside deoxyribosyltransferase (ntd) of Lactobacillus leichmannii.